The chain runs to 122 residues: Small ribosomal subunit protein uS13 (122 aa).

The interval 94–122 is disordered; the sequence is GLPVRGQSTQKNARTRKGPRKTVAGKKGK. The span at 106-122 shows a compositional bias: basic residues; the sequence is ARTRKGPRKTVAGKKGK.

It belongs to the universal ribosomal protein uS13 family. In terms of assembly, part of the 30S ribosomal subunit. Forms a loose heterodimer with protein S19. Forms two bridges to the 50S subunit in the 70S ribosome.

Functionally, located at the top of the head of the 30S subunit, it contacts several helices of the 16S rRNA. In the 70S ribosome it contacts the 23S rRNA (bridge B1a) and protein L5 of the 50S subunit (bridge B1b), connecting the 2 subunits; these bridges are implicated in subunit movement. Contacts the tRNAs in the A and P-sites. The sequence is that of Small ribosomal subunit protein uS13 from Mycoplasmopsis synoviae (strain 53) (Mycoplasma synoviae).